The sequence spans 104 residues: Sweet protein mabinlin-1 (104 aa).

Intrachain disulfides connect Cys-4/Cys-53, Cys-17/Cys-42, Cys-43/Cys-91, and Cys-55/Cys-99.

The protein belongs to the 2S seed storage albumins family. Heterodimer of a small A and a large B chain linked by disulfide bonds.

In terms of biological role, 2S seed storage protein having sweetness-inducing activity. This form is not heat stable. This is Sweet protein mabinlin-1 from Capparis masaikai (Mabinlang).